Reading from the N-terminus, the 436-residue chain is tRNA(Ile)-lysidine synthase (436 aa).

An ATP-binding site is contributed by 27 to 32 (SGGVDS).

Belongs to the tRNA(Ile)-lysidine synthase family.

It localises to the cytoplasm. It catalyses the reaction cytidine(34) in tRNA(Ile2) + L-lysine + ATP = lysidine(34) in tRNA(Ile2) + AMP + diphosphate + H(+). Functionally, ligates lysine onto the cytidine present at position 34 of the AUA codon-specific tRNA(Ile) that contains the anticodon CAU, in an ATP-dependent manner. Cytidine is converted to lysidine, thus changing the amino acid specificity of the tRNA from methionine to isoleucine. The protein is tRNA(Ile)-lysidine synthase of Vibrio vulnificus (strain YJ016).